We begin with the raw amino-acid sequence, 159 residues long: Phosphopantetheine adenylyltransferase (159 aa).

Residue Thr10 participates in substrate binding. ATP-binding positions include 10 to 11 (TF) and His18. Positions 42, 74, and 88 each coordinate substrate. Residues 89–91 (GLR), Glu99, and 124–130 (WSFISSS) contribute to the ATP site.

The protein belongs to the bacterial CoaD family. As to quaternary structure, homohexamer. Mg(2+) is required as a cofactor.

It is found in the cytoplasm. It carries out the reaction (R)-4'-phosphopantetheine + ATP + H(+) = 3'-dephospho-CoA + diphosphate. The protein operates within cofactor biosynthesis; coenzyme A biosynthesis; CoA from (R)-pantothenate: step 4/5. Functionally, reversibly transfers an adenylyl group from ATP to 4'-phosphopantetheine, yielding dephospho-CoA (dPCoA) and pyrophosphate. The polypeptide is Phosphopantetheine adenylyltransferase (Salmonella dublin (strain CT_02021853)).